Reading from the N-terminus, the 143-residue chain is Mediator of RNA polymerase II transcription subunit 10 (143 aa).

A disordered region spans residues Gly123–Ser143. Residues Ala124 to Ser143 are compositionally biased toward polar residues.

This sequence belongs to the Mediator complex subunit 10 family. Component of the Mediator complex.

The protein resides in the nucleus. Functionally, component of the Mediator complex, a coactivator involved in the regulated transcription of nearly all RNA polymerase II-dependent genes. Mediator functions as a bridge to convey information from gene-specific regulatory proteins to the basal RNA polymerase II transcription machinery. Mediator is recruited to promoters by direct interactions with regulatory proteins and serves as a scaffold for the assembly of a functional preinitiation complex with RNA polymerase II and the general transcription factors. The chain is Mediator of RNA polymerase II transcription subunit 10 (NUT2) from Yarrowia lipolytica (strain CLIB 122 / E 150) (Yeast).